Consider the following 513-residue polypeptide: ATP synthase subunit alpha (513 aa).

Residue 169–176 participates in ATP binding; the sequence is GDRQTGKT.

Belongs to the ATPase alpha/beta chains family. F-type ATPases have 2 components, CF(1) - the catalytic core - and CF(0) - the membrane proton channel. CF(1) has five subunits: alpha(3), beta(3), gamma(1), delta(1), epsilon(1). CF(0) has three main subunits: a(1), b(2) and c(9-12). The alpha and beta chains form an alternating ring which encloses part of the gamma chain. CF(1) is attached to CF(0) by a central stalk formed by the gamma and epsilon chains, while a peripheral stalk is formed by the delta and b chains.

The protein resides in the cell inner membrane. The enzyme catalyses ATP + H2O + 4 H(+)(in) = ADP + phosphate + 5 H(+)(out). In terms of biological role, produces ATP from ADP in the presence of a proton gradient across the membrane. The alpha chain is a regulatory subunit. The chain is ATP synthase subunit alpha from Ralstonia pickettii (strain 12J).